A 346-amino-acid polypeptide reads, in one-letter code: Archaeosine synthase subunit beta (346 aa).

A Radical SAM core domain is found at 36–276 (GVQTKTLTVI…LRQAKAAHPE (241 aa)). 3 residues coordinate [4Fe-4S] cluster: Cys-51, Cys-59, and Cys-62.

Belongs to the radical SAM superfamily. RaSEA family. In terms of assembly, forms a robust complex with the archaeosine synthase alpha subunit ArcS. This complex likely consists of an alpha(2)beta(2) heterotetrameric structure. The cofactor is [4Fe-4S] cluster.

The enzyme catalyses 7-N-[(5S)-5-amino-5-carboxypentyl]formamidino-7-deazaguanosine(15) in tRNA + S-adenosyl-L-methionine = archaeosine(15) in tRNA + L-1-piperideine-6-carboxylate + 5'-deoxyadenosine + L-methionine + 2 H(+). Its pathway is tRNA modification; archaeosine-tRNA biosynthesis. In terms of biological role, radical SAM enzyme involved in the synthesis of archaeosine, a modified nucleoside present in the dihydrouridine loop (D-loop) of archaeal tRNAs. Catalyzes the cleavage of the C(epsilon)-N bond of the lysine moiety of q0kN15-tRNA, leading to the formation of archaeosine at position 15 in tRNAs. The chain is Archaeosine synthase subunit beta from Methanosarcina acetivorans (strain ATCC 35395 / DSM 2834 / JCM 12185 / C2A).